The following is a 324-amino-acid chain: Glutaminase 2 (324 aa).

Substrate is bound by residues serine 75, asparagine 127, glutamate 171, asparagine 178, tyrosine 202, tyrosine 254, and valine 272.

The protein belongs to the glutaminase family. Homotetramer.

The enzyme catalyses L-glutamine + H2O = L-glutamate + NH4(+). The sequence is that of Glutaminase 2 from Halalkalibacterium halodurans (strain ATCC BAA-125 / DSM 18197 / FERM 7344 / JCM 9153 / C-125) (Bacillus halodurans).